Here is a 341-residue protein sequence, read N- to C-terminus: Processive diacylglycerol beta-glycosyltransferase (341 aa).

It belongs to the glycosyltransferase 2 family. Mg(2+) is required as a cofactor.

The protein localises to the cell membrane. The catalysed reaction is a 1,2-diacyl-sn-glycerol + UDP-alpha-D-glucose = a 1,2-diacyl-3-O-(beta-D-glucopyranosyl)-sn-glycerol + UDP + H(+). The enzyme catalyses a 1,2-diacyl-sn-glycerol + UDP-alpha-D-galactose = a 1,2-diacyl-3-O-(beta-D-galactosyl)-sn-glycerol + UDP + H(+). It carries out the reaction a 1,2-diacyl-3-O-(beta-D-glucopyranosyl)-sn-glycerol + UDP-alpha-D-glucose = a 1,2-diacyl-3-O-(beta-D-Glc-(1-&gt;6)-beta-D-Glc)-sn-glycerol + UDP + H(+). It catalyses the reaction a 1,2-diacyl-3-O-(beta-D-galactosyl)-sn-glycerol + UDP-alpha-D-galactose = a 1,2-diacyl-3-O-[beta-D-galactosyl-(1-&gt;6)-beta-D-galactosyl]-sn-glycerol + UDP + H(+). Its pathway is glycolipid metabolism; diglucosyl-diacylglycerol biosynthesis. Activated by the negatively charged lipid dioleoylphosphatidylglycerol (DOPG) and inhibited by N-(n-nonyl)deoxygalactonojirimycin (C9J). Processive glycosyltransferase involved in the biosynthesis of both the non-bilayer-prone beta-monoglycosyldiacylglycerol and the bilayer-forming membrane lipid beta-diglycosyldiacylglycerol. These components contribute to regulate the properties and stability of the membrane. Catalyzes sequentially the transfers of glucosyl or galactosyl residues from UDP-Glc or UDP-Gal to diacylglycerol (DAG) acceptor to form the corresponding beta-glycosyl-DAG (3-O-(beta-D-glycopyranosyl)-1,2-diacyl-sn-glycerol), which then acts as acceptor to give beta-diglycosyl-DAG product (3-O-(beta-D-glycopyranosyl-beta-(1-&gt;6)-D-glycopyranosyl)-1,2-diacyl-sn-glycerol). Dioleoylglycerol (DOG) is a preferred sugar acceptor than 3-O-(beta-D-glucopyranosyl)-1,2-dioleoyl-sn-glycerol. The protein is Processive diacylglycerol beta-glycosyltransferase of Mycoplasma genitalium (strain ATCC 33530 / DSM 19775 / NCTC 10195 / G37) (Mycoplasmoides genitalium).